A 339-amino-acid chain; its full sequence is Serine racemase (339 aa).

Residues Ser43 and Lys63 each contribute to the ATP site. Lys68 serves as the catalytic Proton acceptor. An N6-(pyridoxal phosphate)lysine modification is found at Lys68. Residue Thr90 participates in Ca(2+) binding. Ser93 acts as the Proton acceptor in catalysis. Asn95 lines the pyridoxal 5'-phosphate pocket. At Cys122 the chain carries S-nitrosocysteine. Tyr130 provides a ligand contact to ATP. Position 187 (Asp187) interacts with Mg(2+). Residues Gly195, Gly196, and Gly197 each contribute to the pyridoxal 5'-phosphate site. Residues Glu219, Ala223, and Asp225 each contribute to the Ca(2+) site. Mg(2+) is bound by residues Glu219, Ala223, and Asp225. Residues Glu219, Ala223, and Asp225 each contribute to the Mn(2+) site. Lys287 serves as a coordination point for ATP. Position 323 (Ser323) interacts with pyridoxal 5'-phosphate. An ATP-binding site is contributed by Asn326.

Belongs to the serine/threonine dehydratase family. Mg(2+) is required as a cofactor. Mn(2+) serves as cofactor. It depends on Ca(2+) as a cofactor. The cofactor is pyridoxal 5'-phosphate.

The enzyme catalyses L-serine = D-serine. The catalysed reaction is L-serine = pyruvate + NH4(+). It carries out the reaction D-serine = pyruvate + NH4(+). Its function is as follows. Catalyzes the synthesis of D-serine from L-serine. Has dehydratase activity towards both L-serine and D-serine. This Oryza sativa subsp. indica (Rice) protein is Serine racemase.